The following is a 503-amino-acid chain: ATP synthase subunit alpha, chloroplastic (503 aa).

170-177 (GDRQTGKT) is a binding site for ATP.

Belongs to the ATPase alpha/beta chains family. In terms of assembly, F-type ATPases have 2 components, CF(1) - the catalytic core - and CF(0) - the membrane proton channel. CF(1) has five subunits: alpha(3), beta(3), gamma(1), delta(1), epsilon(1). CF(0) has four main subunits: a, b, b' and c.

It is found in the plastid. The protein localises to the chloroplast thylakoid membrane. It carries out the reaction ATP + H2O + 4 H(+)(in) = ADP + phosphate + 5 H(+)(out). Its function is as follows. Produces ATP from ADP in the presence of a proton gradient across the membrane. The alpha chain is a regulatory subunit. In Trieres chinensis (Marine centric diatom), this protein is ATP synthase subunit alpha, chloroplastic.